Consider the following 387-residue polypeptide: Synaptotagmin-8 (387 aa).

The Extracellular segment spans residues 1–34 (MGHPPVSPSAPAPAGTTAIPGLIPDLVAGTPWPR). A helical; Signal-anchor for type III membrane protein transmembrane segment spans residues 35–55 (WALIAGALAAGVLLVSCLLCA). Residues 56–387 (ACCCCRRHRK…LRLRLPLPHS (332 aa)) are Cytoplasmic-facing. The disordered stretch occupies residues 70 to 99 (KESVGLGSARGTTTTHLVQPDVDGLESSPG). C2 domains lie at 103-219 (QWGC…EHWY) and 231-346 (QVGE…QHWA).

This sequence belongs to the synaptotagmin family. In terms of assembly, homodimer or homooligomer. Homodimerization and homooligomerization do not depend on Ca(2+). Interacts with SYNCRIP isoform 2 C-terminus. Binds inositol 1,3,4,5-tetrakisphosphate (IP4). Binds to AP2 in a Ca(2+)-independent manner. Interacts with STX1A, STX1B and STX2; the interaction is Ca(2+)-dependent.

The protein localises to the cell membrane. It is found in the cytoplasmic vesicle. Its subcellular location is the secretory vesicle. The protein resides in the acrosome. Its function is as follows. Involved in the trafficking and exocytosis of secretory vesicles in non-neuronal tissues. Mediates Ca(2+)-regulation of exocytosis acrosomal reaction in sperm. May mediate Ca(2+)-regulation of exocytosis in insulin secreted cells. The chain is Synaptotagmin-8 (SYT8) from Homo sapiens (Human).